Reading from the N-terminus, the 85-residue chain is Large ribosomal subunit protein bL27 (85 aa).

Residues 1-10 (MAQKKGGGST) are compositionally biased toward gly residues. Residues 1-21 (MAQKKGGGSTRNGRDSQPKML) are disordered.

The protein belongs to the bacterial ribosomal protein bL27 family.

The polypeptide is Large ribosomal subunit protein bL27 (Polaromonas naphthalenivorans (strain CJ2)).